Consider the following 571-residue polypeptide: Serine/threonine-protein kinase Nek7 (571 aa).

Residues Tyr19–Leu277 form the Protein kinase domain. ATP is bound by residues Val25–Asp33 and Lys48. The active-site Proton acceptor is Asp144. 2 disordered regions span residues Ser298–Lys321 and Thr338–Arg363. The segment covering Phe312–Lys321 has biased composition (basic and acidic residues). Positions Ser342–Ser351 are enriched in low complexity.

Belongs to the protein kinase superfamily. NEK Ser/Thr protein kinase family. NIMA subfamily.

The enzyme catalyses L-seryl-[protein] + ATP = O-phospho-L-seryl-[protein] + ADP + H(+). It carries out the reaction L-threonyl-[protein] + ATP = O-phospho-L-threonyl-[protein] + ADP + H(+). Its function is as follows. May be involved in plant development processes. This Arabidopsis thaliana (Mouse-ear cress) protein is Serine/threonine-protein kinase Nek7 (NEK7).